A 373-amino-acid chain; its full sequence is RNA 3'-terminal phosphate cyclase-like protein (373 aa).

Belongs to the RNA 3'-terminal cyclase family. Type 2 subfamily. In terms of assembly, part of the small subunit (SSU) processome, composed of more than 70 proteins and the RNA chaperone small nucleolar RNA (snoRNA) U3. Interacts with BMS1.

It is found in the nucleus. It localises to the nucleolus. As part of the small subunit (SSU) processome, it plays a role in 40S-ribosomal-subunit biogenesis in the early pre-rRNA processing steps at sites A0, A1 and A2 that are required for proper maturation of the 18S RNA. Activates BMS1 by promoting GDP/GTP exchange. Does not have cyclase activity. The protein is RNA 3'-terminal phosphate cyclase-like protein (Rcl1) of Mus musculus (Mouse).